The sequence spans 571 residues: Proline--tRNA ligase (571 aa).

This sequence belongs to the class-II aminoacyl-tRNA synthetase family. ProS type 1 subfamily. In terms of assembly, homodimer.

The protein localises to the cytoplasm. It catalyses the reaction tRNA(Pro) + L-proline + ATP = L-prolyl-tRNA(Pro) + AMP + diphosphate. Functionally, catalyzes the attachment of proline to tRNA(Pro) in a two-step reaction: proline is first activated by ATP to form Pro-AMP and then transferred to the acceptor end of tRNA(Pro). As ProRS can inadvertently accommodate and process non-cognate amino acids such as alanine and cysteine, to avoid such errors it has two additional distinct editing activities against alanine. One activity is designated as 'pretransfer' editing and involves the tRNA(Pro)-independent hydrolysis of activated Ala-AMP. The other activity is designated 'posttransfer' editing and involves deacylation of mischarged Ala-tRNA(Pro). The misacylated Cys-tRNA(Pro) is not edited by ProRS. This chain is Proline--tRNA ligase, found in Vibrio vulnificus (strain CMCP6).